The chain runs to 429 residues: Glutamate-1-semialdehyde 2,1-aminomutase (429 aa).

Lys265 is subject to N6-(pyridoxal phosphate)lysine.

It belongs to the class-III pyridoxal-phosphate-dependent aminotransferase family. HemL subfamily. In terms of assembly, homodimer. Pyridoxal 5'-phosphate serves as cofactor.

Its subcellular location is the cytoplasm. It catalyses the reaction (S)-4-amino-5-oxopentanoate = 5-aminolevulinate. The protein operates within porphyrin-containing compound metabolism; protoporphyrin-IX biosynthesis; 5-aminolevulinate from L-glutamyl-tRNA(Glu): step 2/2. This Legionella pneumophila (strain Corby) protein is Glutamate-1-semialdehyde 2,1-aminomutase.